The sequence spans 354 residues: Rhodopsin (354 aa).

Residues 1-36 are Extracellular-facing; the sequence is MNGTEGENFYVPMSNKTGVVRSPFDYPQYYLGEPWM. N2 and N15 each carry an N-linked (GlcNAc...) asparagine glycan. A helical membrane pass occupies residues 37-61; it reads FSALAAYMFFLILTGLPVNFLTLFV. The Cytoplasmic segment spans residues 62-73; sequence TIQHKKLRQPLN. A helical transmembrane segment spans residues 74 to 96; the sequence is YILLNLAVSDLFMVFGGFTTTII. Residues 97-110 lie on the Extracellular side of the membrane; it reads TSMNGYFIFGPAGC. C110 and C187 are disulfide-bonded. A helical membrane pass occupies residues 111–133; the sequence is NFEGFFATLGGEVGLWCLVVLAI. A 'Ionic lock' involved in activated form stabilization motif is present at residues 134–136; sequence ERY. Over 134–152 the chain is Cytoplasmic; it reads ERYMVVCKPMANFRFGSQH. Residues 153 to 173 traverse the membrane as a helical segment; it reads AIIGVVFTWIMALSCAGPPLV. At 174 to 202 the chain is on the extracellular side; it reads GWSRYIPEGLQCSCGVDYYTMKPEVNNES. Residues 203–224 form a helical membrane-spanning segment; sequence FVIYMFVVHFTIPLIVIFFCYG. Residues 225–252 lie on the Cytoplasmic side of the membrane; it reads RLVCTVKEAAAQQQESESTQRAEREVTR. The helical transmembrane segment at 253-274 threads the bilayer; that stretch reads MVIIMVVAFLICWVPYASVAFY. Over 275-286 the chain is Extracellular; that stretch reads IFINQGCDFTPF. A helical transmembrane segment spans residues 287–308; it reads FMTVPAFFAKSSAVYNPLIYIL. At K296 the chain carries N6-(retinylidene)lysine. Residues 309-354 lie on the Cytoplasmic side of the membrane; it reads MNKQFRNCMITTICLGKNPFEEEESTSASASKTEASSVSSSQVAPA. C322 carries the S-palmitoyl cysteine lipid modification. The tract at residues 333–354 is disordered; the sequence is STSASASKTEASSVSSSQVAPA. The span at 334-354 shows a compositional bias: low complexity; the sequence is TSASASKTEASSVSSSQVAPA.

This sequence belongs to the G-protein coupled receptor 1 family. Opsin subfamily. In terms of processing, phosphorylated on some or all of the serine and threonine residues present in the C-terminal region. Post-translationally, contains one covalently linked retinal chromophore.

Its subcellular location is the membrane. The protein resides in the cell projection. It is found in the cilium. It localises to the photoreceptor outer segment. Photoreceptor required for image-forming vision at low light intensity. While most salt water fish species use retinal as chromophore, most freshwater fish use 3-dehydroretinal, or a mixture of retinal and 3-dehydroretinal. Light-induced isomerization of 11-cis to all-trans retinal triggers a conformational change that activates signaling via G-proteins. Subsequent receptor phosphorylation mediates displacement of the bound G-protein alpha subunit by arrestin and terminates signaling. This Leucoraja erinaceus (Little skate) protein is Rhodopsin (rho).